A 348-amino-acid chain; its full sequence is Rhodopsin (348 aa).

M1 is modified (N-acetylmethionine). The Extracellular portion of the chain corresponds to 1–36 (MNGTEGPNFYVPFSNITGVVRSPFEQPQYYLAEPWQ). N2 and N15 each carry an N-linked (GlcNAc...) asparagine glycan. The helical transmembrane segment at 37 to 61 (FSMLAAYMFLLIVLGFPINFLTLYV) threads the bilayer. At 62 to 73 (TVQHKKLRTPLN) the chain is on the cytoplasmic side. A helical transmembrane segment spans residues 74 to 96 (YILLNLAVADLFMVFGGFTTTLY). Residues 97 to 110 (TSLHGYFVFGPTGC) are Extracellular-facing. A disulfide bridge connects residues C110 and C187. A helical membrane pass occupies residues 111–133 (NLEGFFATLGGEIGLWSLVVLAI). Positions 134–136 (ERY) match the 'Ionic lock' involved in activated form stabilization motif. Residues 134 to 152 (ERYVVVCKPMSNFRFGENH) are Cytoplasmic-facing. The chain crosses the membrane as a helical span at residues 153–173 (AIMGVAFTWVMALACAAPPLV). Over 174–202 (GWSRYIPEGMQCSCGIDYYTLKPEVNNES) the chain is Extracellular. Position 201 (E201) interacts with Zn(2+). Residues 203–224 (FVIYMFVVHFTIPMIVIFFCYG) form a helical membrane-spanning segment. Residues 225–252 (QLVFTVKEAAAQQQESATTQKAEKEVTR) lie on the Cytoplasmic side of the membrane. Residues 253-274 (MVIIMVIFFLICWLPYASVAMY) traverse the membrane as a helical segment. Over 275–286 (IFTHQGSNFGPI) the chain is Extracellular. Position 279 (Q279) interacts with Zn(2+). A helical transmembrane segment spans residues 287–308 (FMTLPAFFAKTASIYNPIIYIM). Residue K296 is modified to N6-(retinylidene)lysine. The Cytoplasmic portion of the chain corresponds to 309–348 (MNKQFRNCMLTSLCCGKNPLGDDEASATASKTETSQVAPA). Residues C322 and C323 are each lipidated (S-palmitoyl cysteine). Residues 330–348 (DDEASATASKTETSQVAPA) form an interaction with SAG region. Residue S334 is modified to Phosphoserine. At T336 the chain carries Phosphothreonine. Phosphoserine is present on S338. 2 positions are modified to phosphothreonine: T340 and T342. S343 carries the phosphoserine modification.

The protein belongs to the G-protein coupled receptor 1 family. Opsin subfamily. In terms of assembly, homodimer. May form a complex composed of RHO, GRK1 and RCVRN in a Ca(2+)-dependent manner; RCVRN prevents the interaction between GRK1 and RHO. Interacts with GRK1. Interacts (phosphorylated form) with SAG. Interacts with GNAT1. Interacts with GNAT3. SAG and G-proteins compete for a common binding site. Interacts with PRCD; the interaction promotes PRCD stability. Forms a complex with ASAP1 and ARF4. Forms a complex with ASAP1, RAB11A, Rabin8/RAB3IP, ARF4 and RAB11FIP3; the complex regulates Golgi-to-cilia rhodopsin/RHO transport in photoreceptors. In terms of processing, phosphorylated on some or all of the serine and threonine residues present in the C-terminal region. Contains one covalently linked retinal chromophore. Upon light absorption, the covalently bound 11-cis-retinal is converted to all-trans-retinal. After hydrolysis of the Schiff base and release of the covalently bound all-trans-retinal, active rhodopsin is regenerated by binding of a fresh molecule of 11-cis-retinal.

The protein resides in the membrane. Its subcellular location is the cell projection. The protein localises to the cilium. It is found in the photoreceptor outer segment. In terms of biological role, photoreceptor required for image-forming vision at low light intensity. Required for photoreceptor cell viability after birth. Light-induced isomerization of 11-cis to all-trans retinal triggers a conformational change that activates signaling via G-proteins. Subsequent receptor phosphorylation mediates displacement of the bound G-protein alpha subunit by the arrestin SAG and terminates signaling. The polypeptide is Rhodopsin (Rho) (Rattus norvegicus (Rat)).